We begin with the raw amino-acid sequence, 472 residues long: Adenosylhomocysteinase (472 aa).

3 residues coordinate substrate: Thr-60, Asp-136, and Glu-197. 198-200 (TTT) lines the NAD(+) pocket. The substrate site is built by Lys-227 and Asp-231. NAD(+)-binding positions include Asn-232, 261–266 (GYGDVG), Glu-284, Asn-319, 340–342 (IGH), and Asn-388.

Belongs to the adenosylhomocysteinase family. NAD(+) is required as a cofactor.

Its subcellular location is the cytoplasm. The catalysed reaction is S-adenosyl-L-homocysteine + H2O = L-homocysteine + adenosine. Its pathway is amino-acid biosynthesis; L-homocysteine biosynthesis; L-homocysteine from S-adenosyl-L-homocysteine: step 1/1. May play a key role in the regulation of the intracellular concentration of adenosylhomocysteine. The chain is Adenosylhomocysteinase from Maridesulfovibrio salexigens (strain ATCC 14822 / DSM 2638 / NCIMB 8403 / VKM B-1763) (Desulfovibrio salexigens).